The following is a 1873-amino-acid chain: MEEGVQAPDWDSDETVIEGSVTESDLEEKELPWRRLLFDQDASLKSEFSLHPDTRGMCKGMPSPEIQLGFKLREDLQEQMNKNKMMPVLSEDTILQSQDETERNQALLQTRKNCSMFIGSFRQSGLSLNHQNIEGPEAESPEVLPHIEKELSEGRDSPEVSLLSGTAITVSDTVAVKETSLVEPEKILAAPNTFFEPRKEVTMTMTSEETKDEESSLETFVSALESLLTSPESTQEERLFELVSDFDRKELMNPLSDSLSSISIPLNSWSACHRDLLEDAKDDALPAELLEALNTLSEAKVETICHRKEGGSSLIARNECLEVEFNTSQTNEDCTQIAETLQDPNPSGLQTLAHQNITSCEPLSNKRNSNSVTNSSDQETACVLRRSSRLEKLKVSRDAKYSDHMYKMPEKILPKILGCEDLTNNNSSAQNFRMQDPALMIDGKEKNMHSARFKNGKQIRKNEQFSGKKEKMKVNKISLHSINRRNIFGENLVYKAALHDDADLVHHCIKKGGNVNQPSYAGWTALHEASVGGFYRTASELLKGGADVNIKGLYQITPLHDAVMNGHYKVAELLLLNGADPLFRNDDGKCALDEAKDLCMKRLLERYIPKHQKCLTSAQRSSIDPLDIEDVYQHKKPKFSSKSHIWHVYNENSNRQKLEHVKVNKGSKASLFINKEDVYEYYQKDPKNTKFGKSKHKQSTLDQIYSTGLRKGNLHNVKDPNTNVPKGIGRRKTQHKRTQVDDVDCNPRKILAVSPSRRINRLVTYQQHIPETHNDLPEELCEPSSLTLSSLRNGLDSSTEACSVSKEKHIQNLDLSDSQEVQCLELESVDQTEAVSFPGLLLHKEIKLPVVTTDKQPHTLQEQHHVLYKSHENSNLVPKDERFNKWENSFLSFVKENSDNDDDDDCSTSEKAITSKKVLCSTGGKKHYNFKENLTNKKEMGFQQFLLSEDHLSQENELKAVSLTTLPEQEAVNFSYSDNAVISEHVANYEQCIFGPSFDHSNGNPEQNSLACMRTLLTHEASKLTNHVELFKKPQDYIPRAPTFLMNQTDTHIVEKMAKNCDTERNYIDRDQKIIYSNEPLSIVAHSQVIETTKVEKRRQNHLESETIHNIDSHSTDNMSKELANISKLSQREKKEISHKPGMKAGRINKRNARGESQLHLAVRRGNLPLVKALIESGADVNLNDNAGWTPLHEASNEGSIDIIVELLKAGAKVNCENIDGILPLHDAVANNHLKAAEILLQNGANPNQKDQKQKSALDEADDEKMKELLRSYGAIETVNRDESDAIVNEKIPAVRSKRHKQCFCDDGKTIDSSSLSHQERSRESLSVHQTLSAILQDIEEKQEYLLEFEIRNPEDAEQYIEKMLKIKKIMDNVLAKQKAERDDLAKKYRVSIESFKHGALREQLANLAARQKSLLVVAKKQKKISLKIQNCRNVTSLPCLSLRKLPPRSEISSEKDSQELTSLENLEHPQSGSLSPVSGSMQETQLSLETWNYSQNTNICLNSEAVRRGEFSGNDMNSKQNGSDCTLDGFPKSRHSDGTEKNKLPSQPVAFIGQTEYSQKENDLTEATDKDHEFYVSSPVIGKLNISETASVLAENAAHPSNIICDQDLSNYDPKRGNRKTSSQQSPTGASESLAHQGIAVLGSDTVHQMKPYLKKSVSVVPCADDSQISSSSGSGQQDTIKKALNYSTAPKKKCIQIKDLILLGRINPGNNILEFKTQETTHKASILLNGKLKVESGQIYKNPVTWLKDLLGGNSYVTWNYAWSKVTYLGKELLRYVSEDAPILPEPNSVPQQYQPCLPEVACLDDPVQEPNKSMFEKTKFGQGTSRESMQSSPRYLQINEILLISDQEFLPCHIMDQHWKFCVECEELTP.

Disordered regions lie at residues 1–27 (MEEG…SDLE) and 361–380 (EPLS…DQET). The segment covering 361–379 (EPLSNKRNSNSVTNSSDQE) has biased composition (polar residues). 3 ANK repeats span residues 488–517 (FGEN…NVNQ), 521–550 (AGWT…DVNI), and 554–583 (YQIT…DPLF). The disordered stretch occupies residues 707–740 (TGLRKGNLHNVKDPNTNVPKGIGRRKTQHKRTQV). Over residues 728-737 (IGRRKTQHKR) the composition is skewed to basic residues. 3 ANK repeats span residues 1154-1183 (RGES…DVNL), 1187-1216 (AGWT…KVNC), and 1220-1249 (DGIL…NPNQ). Disordered stretches follow at residues 1242–1263 (QNGA…EADD), 1449–1482 (RSEI…SGSM), 1512–1549 (FSGN…PSQP), and 1606–1634 (CDQD…ASES). Basic and acidic residues predominate over residues 1250–1263 (KDQKQKSALDEADD). Polar residues-rich tracts occupy residues 1460-1482 (ELTS…SGSM) and 1515-1525 (NDMNSKQNGSD). The segment covering 1535–1544 (RHSDGTEKNK) has biased composition (basic and acidic residues). A compositionally biased stretch (polar residues) spans 1621–1632 (KTSSQQSPTGAS). Residues 1683-1778 (KKALNYSTAP…TYLGKELLRY (96 aa)) form the RAMA domain.

In terms of assembly, interacts with REC114; the interaction is direct. Interacts with IHO1.

It is found in the nucleus. The protein localises to the chromosome. Its function is as follows. Required for DNA double-strand breaks (DSBs) formation during meiotic recombination. Regulates the spatial and temporal patterns of pre-DSB recombinosome assembly and recombination activity by acting as a scaffold that anchors REC114 and other factors to specific genomic locations, thereby regulating DSB formation. Plays a key role in recombination in the pseudoautosomal regions of sex chromosomes. The sequence is that of Ankyrin repeat domain-containing protein 31 from Homo sapiens (Human).